The sequence spans 543 residues: Chaperonin GroEL (543 aa).

ATP is bound by residues 29-32, 86-90, G413, 477-479, and D493; these read TLGP, DGTTT, and DAL. Positions 524–543 are disordered; it reads EKDKPEMPGGAPGMGMGGMY. Residues 533 to 543 are compositionally biased toward gly residues; the sequence is GAPGMGMGGMY.

This sequence belongs to the chaperonin (HSP60) family. Forms a cylinder of 14 subunits composed of two heptameric rings stacked back-to-back. Interacts with the co-chaperonin GroES.

Its subcellular location is the cytoplasm. It catalyses the reaction ATP + H2O + a folded polypeptide = ADP + phosphate + an unfolded polypeptide.. Functionally, together with its co-chaperonin GroES, plays an essential role in assisting protein folding. The GroEL-GroES system forms a nano-cage that allows encapsulation of the non-native substrate proteins and provides a physical environment optimized to promote and accelerate protein folding. This Clostridium acetobutylicum (strain ATCC 824 / DSM 792 / JCM 1419 / IAM 19013 / LMG 5710 / NBRC 13948 / NRRL B-527 / VKM B-1787 / 2291 / W) protein is Chaperonin GroEL.